The sequence spans 655 residues: Fidgetin-like protein 1 (655 aa).

Residues 289–313 (QQKKHSNQPQRNPGPLYGGGKKSLG) are disordered. ATP-binding positions include A385 and 425 to 430 (GTGKTL).

It belongs to the AAA ATPase family. Hexamer. Mg(2+) serves as cofactor.

The protein resides in the nucleus. Its subcellular location is the cytoplasm. It is found in the perinuclear region. The enzyme catalyses ATP + H2O = ADP + phosphate + H(+). In terms of biological role, may be involved in DNA double-strand break (DBS) repair via homologous recombination (HR). May regulate osteoblast proliferation and differentiation. The polypeptide is Fidgetin-like protein 1 (fignl1) (Xenopus laevis (African clawed frog)).